The chain runs to 272 residues: tRNA pseudouridine synthase B (272 aa).

Catalysis depends on Asp38, which acts as the Nucleophile.

It belongs to the pseudouridine synthase TruB family. Type 1 subfamily.

It catalyses the reaction uridine(55) in tRNA = pseudouridine(55) in tRNA. In terms of biological role, responsible for synthesis of pseudouridine from uracil-55 in the psi GC loop of transfer RNAs. In Campylobacter jejuni subsp. jejuni serotype O:2 (strain ATCC 700819 / NCTC 11168), this protein is tRNA pseudouridine synthase B.